Here is a 682-residue protein sequence, read N- to C-terminus: Elongation factor G (682 aa).

The region spanning Gln-8–Val-282 is the tr-type G domain. Residues Ala-17 to Thr-24, Asp-81 to His-85, and Asn-135 to Asp-138 each bind GTP.

Belongs to the TRAFAC class translation factor GTPase superfamily. Classic translation factor GTPase family. EF-G/EF-2 subfamily.

It localises to the cytoplasm. Its function is as follows. Catalyzes the GTP-dependent ribosomal translocation step during translation elongation. During this step, the ribosome changes from the pre-translocational (PRE) to the post-translocational (POST) state as the newly formed A-site-bound peptidyl-tRNA and P-site-bound deacylated tRNA move to the P and E sites, respectively. Catalyzes the coordinated movement of the two tRNA molecules, the mRNA and conformational changes in the ribosome. The polypeptide is Elongation factor G (Malacoplasma penetrans (strain HF-2) (Mycoplasma penetrans)).